The primary structure comprises 394 residues: Elongation factor Tu (394 aa).

Positions 10 to 204 (KPHINVGTIG…HLDNYIPEPK (195 aa)) constitute a tr-type G domain. A G1 region spans residues 19-26 (GHVDHGKT). 19–26 (GHVDHGKT) lines the GTP pocket. Thr-26 serves as a coordination point for Mg(2+). A G2 region spans residues 60–64 (GITIN). Positions 81–84 (DCPG) are G3. GTP-binding positions include 81–85 (DCPGH) and 136–139 (NKCD). Positions 136–139 (NKCD) are G4. The G5 stretch occupies residues 174 to 176 (SAL).

Belongs to the TRAFAC class translation factor GTPase superfamily. Classic translation factor GTPase family. EF-Tu/EF-1A subfamily. In terms of assembly, monomer.

It localises to the cytoplasm. It catalyses the reaction GTP + H2O = GDP + phosphate + H(+). In terms of biological role, GTP hydrolase that promotes the GTP-dependent binding of aminoacyl-tRNA to the A-site of ribosomes during protein biosynthesis. The chain is Elongation factor Tu from Wigglesworthia glossinidia brevipalpis.